Consider the following 507-residue polypeptide: Glycerol kinase (507 aa).

ADP is bound at residue threonine 14. Threonine 14, threonine 15, and serine 16 together coordinate ATP. Threonine 14 is a binding site for sn-glycerol 3-phosphate. Arginine 18 serves as a coordination point for ADP. Residues arginine 84, glutamate 85, tyrosine 136, and aspartate 246 each contribute to the sn-glycerol 3-phosphate site. Positions 84, 85, 136, 246, and 247 each coordinate glycerol. Positions 268 and 311 each coordinate ADP. 4 residues coordinate ATP: threonine 268, glycine 311, glutamine 315, and glycine 412. 2 residues coordinate ADP: glycine 412 and asparagine 416.

It belongs to the FGGY kinase family.

The enzyme catalyses glycerol + ATP = sn-glycerol 3-phosphate + ADP + H(+). It participates in polyol metabolism; glycerol degradation via glycerol kinase pathway; sn-glycerol 3-phosphate from glycerol: step 1/1. Inhibited by fructose 1,6-bisphosphate (FBP). Functionally, key enzyme in the regulation of glycerol uptake and metabolism. Catalyzes the phosphorylation of glycerol to yield sn-glycerol 3-phosphate. This Vibrio atlanticus (strain LGP32) (Vibrio splendidus (strain Mel32)) protein is Glycerol kinase.